Reading from the N-terminus, the 384-residue chain is Spermidine/putrescine import ATP-binding protein PotA (384 aa).

In terms of domain architecture, ABC transporter spans 6 to 238 (IAFKNVSKVF…PINHFVATFI (233 aa)). 40–47 (GASGSGKS) provides a ligand contact to ATP.

The protein belongs to the ABC transporter superfamily. Spermidine/putrescine importer (TC 3.A.1.11.1) family. The complex is composed of two ATP-binding proteins (PotA), two transmembrane proteins (PotB and PotC) and a solute-binding protein (PotD).

The protein resides in the cell membrane. The catalysed reaction is ATP + H2O + polyamine-[polyamine-binding protein]Side 1 = ADP + phosphate + polyamineSide 2 + [polyamine-binding protein]Side 1.. In terms of biological role, part of the ABC transporter complex PotABCD involved in spermidine/putrescine import. Responsible for energy coupling to the transport system. This Streptococcus agalactiae serotype Ia (strain ATCC 27591 / A909 / CDC SS700) protein is Spermidine/putrescine import ATP-binding protein PotA.